A 313-amino-acid polypeptide reads, in one-letter code: Type II restriction enzyme BsuMI component YdiR (313 aa).

The segment at 289 to 313 (FVSGDIVDENATTSSDDLPEDFENN) is disordered.

As to quaternary structure, bsuMI restriction activity requires YdiR, YdiS and YdjA.

The enzyme catalyses Endonucleolytic cleavage of DNA to give specific double-stranded fragments with terminal 5'-phosphates.. Its function is as follows. A P subtype restriction enzyme that recognizes the double-stranded sequence 5'-CTCGAG-3'; the cleavage site is unknown. This is Type II restriction enzyme BsuMI component YdiR (ydiR) from Bacillus subtilis (strain 168).